A 69-amino-acid chain; its full sequence is MASYRNSRSRSRSRFRRRRRGRSRVRGRDARQGRSSRRRRRGKGRAHSGKKGRRSGSRRRKRNNNTENK.

The disordered stretch occupies residues 1–69 (MASYRNSRSR…RKRNNNTENK (69 aa)). 2 stretches are compositionally biased toward basic residues: residues 7–25 (SRSR…RSRV) and 34–63 (RSSR…RKRN).

This sequence belongs to the protamine P1 family. In terms of tissue distribution, testis.

The protein resides in the nucleus. Its subcellular location is the chromosome. Its function is as follows. Protamines substitute for histones in the chromatin of sperm during the haploid phase of spermatogenesis. They compact sperm DNA into a highly condensed, stable and inactive complex. The chain is Sperm protamine P1 (PRM1) from Perameles gunnii (Eastern barred bandicoot).